Here is a 669-residue protein sequence, read N- to C-terminus: DNA mismatch repair protein MutL (669 aa).

Residues Phe356 to Glu382 are disordered. A compositionally biased stretch (polar residues) spans Asn361–Lys378.

Belongs to the DNA mismatch repair MutL/HexB family.

Its function is as follows. This protein is involved in the repair of mismatches in DNA. It is required for dam-dependent methyl-directed DNA mismatch repair. May act as a 'molecular matchmaker', a protein that promotes the formation of a stable complex between two or more DNA-binding proteins in an ATP-dependent manner without itself being part of a final effector complex. This Staphylococcus aureus (strain USA300) protein is DNA mismatch repair protein MutL.